Consider the following 367-residue polypeptide: GPN-loop GTPase 1 (367 aa).

GTP is bound by residues 15 to 22 (GMAGSGKT) and 18 to 23 (GSGKTT). The Gly-Pro-Asn (GPN)-loop; involved in dimer interface signature appears at 75-77 (GPN). A GTP-binding site is contributed by 178-181 (NKCD). A coiled-coil region spans residues 247–290 (EGMDDFLEAVKAKVKEYEEEYVPEMERMKEIQRQTKERQKEAQL). The segment at 306–332 (VGLTVSDAEDEYNGELVDPDEDDGLTA) is disordered. A Phosphoserine modification is found at Ser311. The span at 312 to 332 (DAEDEYNGELVDPDEDDGLTA) shows a compositional bias: acidic residues.

This sequence belongs to the GPN-loop GTPase family. As to quaternary structure, heterodimers with gpn2 or fet5/gpn3. Binds to RNA polymerase II (RNAPII).

It is found in the cytoplasm. In terms of biological role, small GTPase required for proper nuclear import of RNA polymerase II (RNAPII). May act at an RNAP assembly step prior to nuclear import. The chain is GPN-loop GTPase 1 from Schizosaccharomyces pombe (strain 972 / ATCC 24843) (Fission yeast).